The primary structure comprises 401 residues: Bifunctional D-cysteine desulfhydrase/1-aminocyclopropane-1-carboxylate deaminase, mitochondrial (401 aa).

The transit peptide at 1–37 directs the protein to the mitochondrion; sequence MRGRSLTLSRVKLELARRSMSATSVPSMADFLTKKPY. Position 2 is an N-acetylserine (Arg2). Lys93 bears the N6-(pyridoxal phosphate)lysine mark. Catalysis depends on Ser120, which acts as the Nucleophile.

It belongs to the ACC deaminase/D-cysteine desulfhydrase family. The cofactor is pyridoxal 5'-phosphate. In terms of tissue distribution, highly expressed in stems and cauline leaves, and at lower levels in roots, rosette leaves and flowers.

The protein resides in the mitochondrion. It catalyses the reaction D-cysteine + H2O = hydrogen sulfide + pyruvate + NH4(+) + H(+). It carries out the reaction 1-aminocyclopropane-1-carboxylate + H2O = 2-oxobutanoate + NH4(+). Its function is as follows. Catalyzes the production of hydrogen sulfide (H2S) from cysteine. Is mainly responsible for the degradation of cysteine to generate H2S, a regulator of stomatal movement and closure. Has high affinity for D-cysteine. Functionally, possesses 1-aminocyclopropane-1-carboxylic acid (ACC) deaminase activity. Acts as a regulator of ACC levels and causes changes in ethylene levels. In Arabidopsis thaliana (Mouse-ear cress), this protein is Bifunctional D-cysteine desulfhydrase/1-aminocyclopropane-1-carboxylate deaminase, mitochondrial (DCD).